A 354-amino-acid polypeptide reads, in one-letter code: Eukaryotic translation initiation factor 3 subunit H (354 aa).

Positions M1–S28 are disordered. Polar residues predominate over residues Q19–S28. In terms of domain architecture, MPN spans V33–A174.

Belongs to the eIF-3 subunit H family. In terms of assembly, component of the eukaryotic translation initiation factor 3 (eIF-3) complex.

The protein localises to the cytoplasm. Its function is as follows. Component of the eukaryotic translation initiation factor 3 (eIF-3) complex, which is involved in protein synthesis of a specialized repertoire of mRNAs and, together with other initiation factors, stimulates binding of mRNA and methionyl-tRNAi to the 40S ribosome. The eIF-3 complex specifically targets and initiates translation of a subset of mRNAs involved in cell proliferation. In Monosiga brevicollis (Choanoflagellate), this protein is Eukaryotic translation initiation factor 3 subunit H.